Consider the following 441-residue polypeptide: Tol-Pal system protein TolB (441 aa).

Positions 1-23 (MRNAIATVLLGLAMLLPVGAVQA) are cleaved as a signal peptide. The segment at 420–441 (RNLKPVKTPDGASDPSWSPLQN) is disordered.

The protein belongs to the TolB family. The Tol-Pal system is composed of five core proteins: the inner membrane proteins TolA, TolQ and TolR, the periplasmic protein TolB and the outer membrane protein Pal. They form a network linking the inner and outer membranes and the peptidoglycan layer.

The protein localises to the periplasm. In terms of biological role, part of the Tol-Pal system, which plays a role in outer membrane invagination during cell division and is important for maintaining outer membrane integrity. In Ruegeria sp. (strain TM1040) (Silicibacter sp.), this protein is Tol-Pal system protein TolB.